We begin with the raw amino-acid sequence, 241 residues long: Probable transcriptional regulatory protein Reut_A2522 (241 aa).

Belongs to the TACO1 family.

It is found in the cytoplasm. This is Probable transcriptional regulatory protein Reut_A2522 from Cupriavidus pinatubonensis (strain JMP 134 / LMG 1197) (Cupriavidus necator (strain JMP 134)).